Reading from the N-terminus, the 97-residue chain is Integration host factor subunit alpha (97 aa).

Belongs to the bacterial histone-like protein family. As to quaternary structure, heterodimer of an alpha and a beta chain.

This protein is one of the two subunits of integration host factor, a specific DNA-binding protein that functions in genetic recombination as well as in transcriptional and translational control. This chain is Integration host factor subunit alpha, found in Acinetobacter baylyi (strain ATCC 33305 / BD413 / ADP1).